The chain runs to 1035 residues: MPPPPHIKPENVLKRAQELIAVGQAPAALTVLHEHATSKRTRSSPIASLEPVMLLFVELCVDLRKGKAAKDGLYQYKNIAQNSNVGTIEIVLKKFIELAEKKVTEAQAKADEIQSSLESAAPSSNVEDLEAIETPETILLATVSGEQSRDRTDRAVVTPWLKFLWETYRTVLEILKNNARLEIMYQTTALQAFQFCLKYTRKTEFRRLCELLRNHVQNAAKYSAQMHAINLSDPDTLQRHLDTRFQQLNVAVELELWQEAFRSIEDIHTLLSLSKRPAKNVMMANYYEKLARIFLVSENYLFHAAAWSRYYNLLRQSAVTLSTNQGSKKDHPSVTEADMTKAASFVLLSALAIPVISTSRSRGALIDVDEVRKNKNTRLTNLLGMLQSPTRAVLFRDALNKGLLKRVRPEIRELYNILEVDFHPLSICKKVTPILKKIGDDPEMEKYVVPLQQVILTRLFQQLSQVYESVELKFVYELAQFPDPFQITPSMIEKFIMNGCKKGDLAIRVDHISGVLTFDTDVFSSAKALHSGSAAGSAESELGSVQRLQNTPAEIARLQLTRLAKTLHVTCMYVDPSYNDSRLQAKQAALTRAAAGAAKEHEDTLERRVIIEKKKEAATDALQRKQKEEETRKRIRTQQLQEAEKQRLAEEQRERELKRIKDEQDRIRQQELKKQLEELKSGVKGIDLNEIDLEDLDANRLRAIKLAQLEKEKNELTERVRATGKRIDHLERAFRREELKHIAEDYEAQKKVDMEIYERQKAQTLAEAEAKHKEAVALKHRLSRLIPVFSSFRKEVSEKRHEEFEKRRKAAEREFEAKKKQRVKEVQERRRREKIERENAERAKREEEERIKREEEERAARDAERRRILAEEKAKREEERAKMDEIAAKQRQREEEAEARLRAKRAGLSEPPRTESEVRTAPRLNIAPRTSGGPSWRERQAAKEAAGGAAPEAPKAEPEPPRRTGGYVPPHARGGSDAAPPAGNRYVPPSQRSSQPPSRTQTPPTSSPKPEEPKPLASGTGGKWVPRWKQQQQNQ.

Residues 92-121 adopt a coiled-coil conformation; that stretch reads LKKFIELAEKKVTEAQAKADEIQSSLESAA. The PCI domain maps to 339–523; that stretch reads MTKAASFVLL…GVLTFDTDVF (185 aa). Residues 606-910 are a coiled coil; that stretch reads ERRVIIEKKK…LRAKRAGLSE (305 aa). Basic and acidic residues-rich tracts occupy residues 619–632 and 809–901; these read TDAL…EETR and KAAE…EARL. Disordered stretches follow at residues 619 to 649 and 809 to 1035; these read TDAL…QRLA and KAAE…QQNQ. 2 stretches are compositionally biased toward low complexity: residues 943–953 and 988–1004; these read KEAAGGAAPEA and PPSQ…QTPP.

It belongs to the eIF-3 subunit A family. Component of the eukaryotic translation initiation factor 3 (eIF-3) complex.

The protein resides in the cytoplasm. Its function is as follows. RNA-binding component of the eukaryotic translation initiation factor 3 (eIF-3) complex, which is involved in protein synthesis of a specialized repertoire of mRNAs and, together with other initiation factors, stimulates binding of mRNA and methionyl-tRNAi to the 40S ribosome. The eIF-3 complex specifically targets and initiates translation of a subset of mRNAs involved in cell proliferation. The chain is Eukaryotic translation initiation factor 3 subunit A (tif32) from Emericella nidulans (strain FGSC A4 / ATCC 38163 / CBS 112.46 / NRRL 194 / M139) (Aspergillus nidulans).